A 350-amino-acid polypeptide reads, in one-letter code: Ribonuclease H2 subunit B (350 aa).

Polar residues predominate over residues 134–151; that stretch reads QDYSNSSDTGENQKSNSK. The segment at 134–153 is disordered; it reads QDYSNSSDTGENQKSNSKTN.

The protein belongs to the RNase H2 subunit B family. Highly divergent. The RNase 2 complex is a heterotrimer composed of the catalytic subunit RNH201 and of the non-catalytic subunits RNH202 and RNH203.

The protein localises to the nucleus. In terms of biological role, non catalytic subunit of RNase H2, an endonuclease that specifically degrades the RNA of RNA:DNA hybrids. Participates in DNA replication, possibly by mediating the removal of lagging-strand Okazaki fragment RNA primers during DNA replication. Mediates the excision of single ribonucleotides from DNA:RNA duplexes. The sequence is that of Ribonuclease H2 subunit B (RNH202) from Saccharomyces cerevisiae (strain ATCC 204508 / S288c) (Baker's yeast).